We begin with the raw amino-acid sequence, 445 residues long: MHDIKWIREEPEALVRALVRRQVAKDEAVALRDKLLSLDTARRETLTKLEGLLARRNAASKEIGQAKAAKDEARAAALMDEVAKLKVDVPELEQSAKAIEGELDGLLAAIPNVPLESVPEGKDEHDNVELKVVGTKRNYAFTPKQHFELGEALGLMDFETASKLSGARFVVNKGPLARLERALGQFFLDMHVEQHGYTEVNPPLLVRDETMYGTAQLPKFFDDQFAVYAGSTQRAIGDETDAERYWLIPTAEVPLTNLVRDSILSEDELPLRFTANTPCFRAEAGSAGRDTRGMIRQHQFTKVEMVSITTPETSEEEHHRMLACAEAVLQKLDLHYRVVTLCTGDMGFASRKTFDIEVWLPGQNAYREISSCSVCGDFQARRMNARYRPAEGKGPRFVHTLNGSGVAVGRALVAVLETYQQEDGSIVVPDVLQSYMGGVTVIAKA.

Residue 250–252 (TAE) coordinates L-serine. 281 to 283 (RAE) serves as a coordination point for ATP. An L-serine-binding site is contributed by glutamate 304. Residue 368-371 (EISS) participates in ATP binding. Serine 404 is a binding site for L-serine.

Belongs to the class-II aminoacyl-tRNA synthetase family. Type-1 seryl-tRNA synthetase subfamily. In terms of assembly, homodimer. The tRNA molecule binds across the dimer.

It is found in the cytoplasm. It carries out the reaction tRNA(Ser) + L-serine + ATP = L-seryl-tRNA(Ser) + AMP + diphosphate + H(+). The enzyme catalyses tRNA(Sec) + L-serine + ATP = L-seryl-tRNA(Sec) + AMP + diphosphate + H(+). It functions in the pathway aminoacyl-tRNA biosynthesis; selenocysteinyl-tRNA(Sec) biosynthesis; L-seryl-tRNA(Sec) from L-serine and tRNA(Sec): step 1/1. Its function is as follows. Catalyzes the attachment of serine to tRNA(Ser). Is also able to aminoacylate tRNA(Sec) with serine, to form the misacylated tRNA L-seryl-tRNA(Sec), which will be further converted into selenocysteinyl-tRNA(Sec). The polypeptide is Serine--tRNA ligase (Azorhizobium caulinodans (strain ATCC 43989 / DSM 5975 / JCM 20966 / LMG 6465 / NBRC 14845 / NCIMB 13405 / ORS 571)).